Consider the following 128-residue polypeptide: Large ribosomal subunit protein bL20c (128 aa).

This sequence belongs to the bacterial ribosomal protein bL20 family.

Its subcellular location is the plastid. The protein resides in the chloroplast. In terms of biological role, binds directly to 23S ribosomal RNA and is necessary for the in vitro assembly process of the 50S ribosomal subunit. It is not involved in the protein synthesizing functions of that subunit. In Nicotiana sylvestris (Wood tobacco), this protein is Large ribosomal subunit protein bL20c.